The following is a 247-amino-acid chain: Phosphonates import ATP-binding protein PhnC (247 aa).

The ABC transporter domain occupies 5–246; that stretch reads IEVKNLVKNY…EDDIRKVYQT (242 aa). 37-44 provides a ligand contact to ATP; the sequence is GESGAGKS.

The protein belongs to the ABC transporter superfamily. Phosphonates importer (TC 3.A.1.9.1) family. In terms of assembly, the complex is composed of two ATP-binding proteins (PhnC), two transmembrane proteins (PhnE) and a solute-binding protein (PhnD).

It localises to the cell inner membrane. It catalyses the reaction phosphonate(out) + ATP + H2O = phosphonate(in) + ADP + phosphate + H(+). Part of the ABC transporter complex PhnCDE involved in phosphonates import. Responsible for energy coupling to the transport system. This Fusobacterium nucleatum subsp. nucleatum (strain ATCC 25586 / DSM 15643 / BCRC 10681 / CIP 101130 / JCM 8532 / KCTC 2640 / LMG 13131 / VPI 4355) protein is Phosphonates import ATP-binding protein PhnC.